The primary structure comprises 314 residues: Calcium homeostasis modulator protein 4 (314 aa).

At 1-14 (MCPTLNNIVSSLQR) the chain is on the cytoplasmic side. A helical membrane pass occupies residues 15 to 37 (NGIFINSLIAALTIGGQQLFSSS). The Extracellular portion of the chain corresponds to 38–48 (TFSCPCQVGKN). Intrachain disulfides connect Cys-41–Cys-131 and Cys-43–Cys-162. The helical transmembrane segment at 49 to 71 (FYYGSAFLVIPALILLVAGFALR) threads the bilayer. Topologically, residues 72–103 (SQMWTITGEYCCSCAPPYRRISPLECKLACLR) are cytoplasmic. A helical membrane pass occupies residues 104–129 (FFSITGRAVIAPLTWLAVTLLTGTYY). Topologically, residues 130–183 (ECAASEFASVDHYPMFDNVSASKREEILAGFPCCRSAPSDVILVRDEIALLHRY) are extracellular. A helical transmembrane segment spans residues 184–207 (QSQMLGWILITLATIAALVSCCVA). Over 208 to 314 (KCCSPLTSLQ…DRSRGIELKP (107 aa)) the chain is Cytoplasmic.

The protein belongs to the CALHM family. As to quaternary structure, oligomerizes to form decameric and undecameric channels. Two hemichannels can assemble in a tail-to-tail manner to form a gap junction. Placenta.

Its subcellular location is the cell membrane. May assemble to form gap junction channel-like structures involved in intercellular communication. Channel gating and ion conductance are likely regulated by membrane lipids rather than by membrane depolarization or extracellular calcium levels. The protein is Calcium homeostasis modulator protein 4 of Homo sapiens (Human).